The sequence spans 528 residues: Ivanolysin (528 aa).

The signal sequence occupies residues 1–23; sequence MKKIMLLLMTLLLVSLPLAQEAQ. Transmembrane regions (beta stranded) follow at residues 213 to 226, 233 to 242, 311 to 320, and 328 to 340; these read ESQL…AFKA, VNFGAISEGK, STRVKAAFDT, and KGDT…IQNA. Positions 482–492 match the Conserved undecapeptide motif; it reads ECTGLAWEWWR. Positions 514–515 match the Cholesterol binding motif; the sequence is TL.

It belongs to the cholesterol-dependent cytolysin family. In terms of assembly, homooligomeric pore complex of 35 to 50 subunits; when inserted in the host membrane.

It localises to the secreted. Its subcellular location is the host membrane. In terms of biological role, a cholesterol-dependent toxin that causes cytolysis by forming pores in cholesterol containing host membranes. After binding to target membranes, the protein undergoes a major conformation change, leading to its insertion in the host membrane and formation of an oligomeric pore complex. Cholesterol is required for binding to host membranes, membrane insertion and pore formation; cholesterol binding is mediated by a Thr-Leu pair in the C-terminus. Can be reversibly inactivated by oxidation. The sequence is that of Ivanolysin (ilo) from Listeria ivanovii.